Consider the following 209-residue polypeptide: Small ribosomal subunit protein uS3 (209 aa).

The KH type-2 domain maps to 38–107 (IRKFIKNRYY…RVVINIEEIK (70 aa)).

This sequence belongs to the universal ribosomal protein uS3 family. In terms of assembly, part of the 30S ribosomal subunit. Forms a tight complex with proteins S10 and S14.

Functionally, binds the lower part of the 30S subunit head. Binds mRNA in the 70S ribosome, positioning it for translation. This Thermotoga petrophila (strain ATCC BAA-488 / DSM 13995 / JCM 10881 / RKU-1) protein is Small ribosomal subunit protein uS3.